We begin with the raw amino-acid sequence, 680 residues long: Methionine--tRNA ligase (680 aa).

The short motif at 15–25 (PYANGPVHIGH) is the 'HIGH' region element. Positions 147, 150, 160, and 163 each coordinate Zn(2+). Positions 332–336 (KISTS) match the 'KMSKS' region motif. Residue Thr-335 participates in ATP binding. The tRNA-binding domain maps to 578 to 680 (EFEKLDIRVG…REVKPGSEVK (103 aa)).

The protein belongs to the class-I aminoacyl-tRNA synthetase family. MetG type 1 subfamily. In terms of assembly, homodimer. The cofactor is Zn(2+).

The protein localises to the cytoplasm. The catalysed reaction is tRNA(Met) + L-methionine + ATP = L-methionyl-tRNA(Met) + AMP + diphosphate. In terms of biological role, is required not only for elongation of protein synthesis but also for the initiation of all mRNA translation through initiator tRNA(fMet) aminoacylation. The sequence is that of Methionine--tRNA ligase from Phocaeicola vulgatus (strain ATCC 8482 / DSM 1447 / JCM 5826 / CCUG 4940 / NBRC 14291 / NCTC 11154) (Bacteroides vulgatus).